The primary structure comprises 232 residues: Acyl-protein thioesterase 1 (232 aa).

Residues Ser-125, Asp-179, and His-212 each act as charge relay system in the active site.

This sequence belongs to the AB hydrolase superfamily. AB hydrolase 2 family.

It is found in the cytoplasm. It localises to the nucleus. The enzyme catalyses S-hexadecanoyl-L-cysteinyl-[protein] + H2O = L-cysteinyl-[protein] + hexadecanoate + H(+). Functionally, hydrolyzes fatty acids from S-acylated cysteine residues in proteins with a strong preference for palmitoylated G-alpha proteins over other acyl substrates. Mediates the deacylation of G-alpha proteins such as GPA1 in vivo, but has weak or no activity toward palmitoylated Ras proteins. Has weak lysophospholipase activity in vitro; however such activity may not exist in vivo. The polypeptide is Acyl-protein thioesterase 1 (Debaryomyces hansenii (strain ATCC 36239 / CBS 767 / BCRC 21394 / JCM 1990 / NBRC 0083 / IGC 2968) (Yeast)).